The following is a 269-amino-acid chain: NAD kinase (269 aa).

D45 acts as the Proton acceptor in catalysis. NAD(+) is bound by residues 45 to 46 (DG), 122 to 123 (NE), R149, D151, and A186.

This sequence belongs to the NAD kinase family. It depends on a divalent metal cation as a cofactor.

The protein resides in the cytoplasm. The catalysed reaction is NAD(+) + ATP = ADP + NADP(+) + H(+). In terms of biological role, involved in the regulation of the intracellular balance of NAD and NADP, and is a key enzyme in the biosynthesis of NADP. Catalyzes specifically the phosphorylation on 2'-hydroxyl of the adenosine moiety of NAD to yield NADP. The sequence is that of NAD kinase from Staphylococcus haemolyticus (strain JCSC1435).